We begin with the raw amino-acid sequence, 283 residues long: Bifunctional protein FolD (283 aa).

Residues 166 to 168 (GRS), serine 191, and isoleucine 232 contribute to the NADP(+) site.

It belongs to the tetrahydrofolate dehydrogenase/cyclohydrolase family. In terms of assembly, homodimer.

The enzyme catalyses (6R)-5,10-methylene-5,6,7,8-tetrahydrofolate + NADP(+) = (6R)-5,10-methenyltetrahydrofolate + NADPH. It catalyses the reaction (6R)-5,10-methenyltetrahydrofolate + H2O = (6R)-10-formyltetrahydrofolate + H(+). It participates in one-carbon metabolism; tetrahydrofolate interconversion. Functionally, catalyzes the oxidation of 5,10-methylenetetrahydrofolate to 5,10-methenyltetrahydrofolate and then the hydrolysis of 5,10-methenyltetrahydrofolate to 10-formyltetrahydrofolate. This is Bifunctional protein FolD from Rickettsia bellii (strain RML369-C).